The following is a 127-amino-acid chain: Small ribosomal subunit protein uS11 (127 aa).

It belongs to the universal ribosomal protein uS11 family. As to quaternary structure, part of the 30S ribosomal subunit. Interacts with proteins S7 and S18. Binds to IF-3.

Located on the platform of the 30S subunit, it bridges several disparate RNA helices of the 16S rRNA. Forms part of the Shine-Dalgarno cleft in the 70S ribosome. The chain is Small ribosomal subunit protein uS11 from Flavobacterium johnsoniae (strain ATCC 17061 / DSM 2064 / JCM 8514 / BCRC 14874 / CCUG 350202 / NBRC 14942 / NCIMB 11054 / UW101) (Cytophaga johnsonae).